A 365-amino-acid chain; its full sequence is Putrescine carbamoyltransferase (365 aa).

Carbamoyl phosphate is bound by residues 54-58 (STRTR), Arg105, and His132. 277-280 (HCLP) serves as a coordination point for putrescine.

It belongs to the aspartate/ornithine carbamoyltransferase superfamily. PTCase family. Homotrimer.

The protein localises to the cytoplasm. It catalyses the reaction carbamoyl phosphate + putrescine = N-carbamoylputrescine + phosphate + H(+). It participates in amine and polyamine biosynthesis; putrescine biosynthesis via agmatine pathway; putrescine from N-carbamoylputrescine (transferase route): step 1/1. Functionally, catalyzes the phosphorolysis of N-carbamoylputrescine to form carbamoyl phosphate and putrescine. Is involved in the degradation pathway of the polyamine agmatine. The polypeptide is Putrescine carbamoyltransferase (Mycoplasma capricolum subsp. capricolum (strain California kid / ATCC 27343 / NCTC 10154)).